The chain runs to 376 residues: Growth/differentiation factor 8 (376 aa).

Residues 1–24 (MIQKPQMYVYIYLFVLIAAGPVDL) form the signal peptide. Residues 25 to 267 (NEDSEREANV…VTDTPKRSRR (243 aa)) constitute a propeptide that is removed on maturation. Asn72 carries N-linked (GlcNAc...) asparagine glycosylation. Intrachain disulfides connect Cys273–Cys283, Cys282–Cys341, Cys310–Cys373, and Cys314–Cys375.

It belongs to the TGF-beta family. In terms of assembly, homodimer; disulfide-linked. Interacts with WFIKKN2, leading to inhibit its activity. Interacts with FSTL3. Post-translationally, synthesized as large precursor molecule that undergoes proteolytic cleavage to generate an N-terminal propeptide and a disulfide linked C-terminal dimer, which is the biologically active molecule. The circulating form consists of a latent complex of the C-terminal dimer and other proteins, including its propeptide, which maintain the C-terminal dimer in a latent, inactive state. Ligand activation requires additional cleavage of the prodomain by a tolloid-like metalloproteinase.

The protein localises to the secreted. Acts specifically as a negative regulator of skeletal muscle growth. This Rattus norvegicus (Rat) protein is Growth/differentiation factor 8 (Mstn).